We begin with the raw amino-acid sequence, 146 residues long: Probable U6 snRNA-associated Sm-like protein LSm4 (146 aa).

A Sm domain is found at 2–75 (LPLSLLKTAQ…IKYLRVPDEV (74 aa)). Over residues 80–91 (QEEAKSRTDRKP) the composition is skewed to basic and acidic residues. The tract at residues 80 to 146 (QEEAKSRTDR…GGRGGGRGRG (67 aa)) is disordered. The segment covering 137–146 (GGRGGGRGRG) has biased composition (gly residues).

It belongs to the snRNP Sm proteins family. LSm subunits form a heteromer with a doughnut shape.

The protein localises to the nucleus. Binds specifically to the 3'-terminal U-tract of U6 snRNA. The polypeptide is Probable U6 snRNA-associated Sm-like protein LSm4 (Nicotiana tabacum (Common tobacco)).